Here is a 331-residue protein sequence, read N- to C-terminus: Phenylalanine--tRNA ligase alpha subunit (331 aa).

Glutamate 252 contributes to the Mg(2+) binding site.

This sequence belongs to the class-II aminoacyl-tRNA synthetase family. Phe-tRNA synthetase alpha subunit type 1 subfamily. In terms of assembly, tetramer of two alpha and two beta subunits. Mg(2+) serves as cofactor.

It localises to the cytoplasm. It catalyses the reaction tRNA(Phe) + L-phenylalanine + ATP = L-phenylalanyl-tRNA(Phe) + AMP + diphosphate + H(+). In Stenotrophomonas maltophilia (strain R551-3), this protein is Phenylalanine--tRNA ligase alpha subunit.